The chain runs to 503 residues: Potassium voltage-gated channel subfamily V member 1 (503 aa).

Disordered stretches follow at residues 1 to 20 and 171 to 192; these read MDLSPRNRPLLDSSSLDSGS and KKDTDDQESQHESEQDFSQGPC. At 3–213 the chain is on the cytoplasmic side; that stretch reads LSPRNRPLLD…EKPGSSTAAR (211 aa). Low complexity predominate over residues 10–20; the sequence is LLDSSSLDSGS. Over residues 171 to 184 the composition is skewed to basic and acidic residues; the sequence is KKDTDDQESQHESE. The helical transmembrane segment at 214 to 234 threads the bilayer; it reads IFGVISIIFVAVSIVNMALMS. The Extracellular portion of the chain corresponds to 235–241; it reads AELSWLN. A helical transmembrane segment spans residues 242–262; it reads LQLLEILEYVCISWFTGEFIL. The Cytoplasmic segment spans residues 263-279; it reads RFLCVKDRCHFLRKVPN. The chain crosses the membrane as a helical span at residues 280-300; it reads IIDLLAILPFYITLLVESLSG. The Extracellular segment spans residues 301–312; that stretch reads SHTTQELENVGR. A helical; Voltage-sensor membrane pass occupies residues 313–334; it reads LVQVLRLLRALRMLKLGRHSTG. At 335–348 the chain is on the cytoplasmic side; that stretch reads LRSLGMTITQCYEE. The helical transmembrane segment at 349 to 369 threads the bilayer; it reads VGLLLLFLSVGISIFSTIEYF. The short motif at 395-400 is the Selectivity filter element; it reads TVGYGD. A helical membrane pass occupies residues 410–430; it reads IVAFMCILSGILVLALPIAII. At 431 to 503 the chain is on the cytoplasmic side; that stretch reads NDRFSACYFT…RSSGGDDFWF (73 aa).

Belongs to the potassium channel family. V (TC 1.A.1.2) subfamily. Kv8.1/KCNV1 sub-subfamily. In terms of assembly, heteromultimer with KCNB1 and KCNB2. Interacts with KCNC4 and KCND1. In terms of tissue distribution, detected in brain, in neocortex, olfactory tubercle, hippocampus, dentate gyrus, piriform cortex and amygdala. Detected in Purkinje cells and granular cells of the cerebellum, in hippocampal CA4 neurons and neocortex pyramidal cells.

Its subcellular location is the cell membrane. Potassium channel subunit that does not form functional channels by itself. Modulates KCNB1 and KCNB2 channel activity by shifting the threshold for inactivation to more negative values and by slowing the rate of inactivation. Can down-regulate the channel activity of KCNB1, KCNB2, KCNC4 and KCND1, possibly by trapping them in intracellular membranes. In Rattus norvegicus (Rat), this protein is Potassium voltage-gated channel subfamily V member 1 (Kcnv1).